The following is an 83-amino-acid chain: uncharacterized protein (83 aa).

Belongs to the UPF0440 family.

This is an uncharacterized protein from Natronomonas pharaonis (strain ATCC 35678 / DSM 2160 / CIP 103997 / JCM 8858 / NBRC 14720 / NCIMB 2260 / Gabara) (Halobacterium pharaonis).